The following is a 100-amino-acid chain: Defensin-like protein 316 (100 aa).

An N-terminal signal peptide occupies residues methionine 1–alanine 18. 3 disulfide bridges follow: cysteine 21-cysteine 84, cysteine 43-cysteine 64, and cysteine 53-cysteine 76.

This sequence belongs to the DEFL family.

It is found in the secreted. This is Defensin-like protein 316 from Arabidopsis thaliana (Mouse-ear cress).